The primary structure comprises 202 residues: Outer-membrane lipoprotein LolB (202 aa).

The signal sequence occupies residues 1–18; that stretch reads MFRRTYFWLMLLPLFMVG. Residue Cys-19 is the site of N-palmitoyl cysteine attachment. The S-diacylglycerol cysteine moiety is linked to residue Cys-19.

Belongs to the LolB family. Monomer.

It localises to the cell outer membrane. In terms of biological role, plays a critical role in the incorporation of lipoproteins in the outer membrane after they are released by the LolA protein. This is Outer-membrane lipoprotein LolB from Vibrio vulnificus (strain YJ016).